Reading from the N-terminus, the 54-residue chain is Large ribosomal subunit protein bL33 (54 aa).

The protein belongs to the bacterial ribosomal protein bL33 family.

In Legionella pneumophila (strain Lens), this protein is Large ribosomal subunit protein bL33.